Reading from the N-terminus, the 357-residue chain is Holliday junction branch migration complex subunit RuvB (357 aa).

Residues methionine 1–proline 15 are compositionally biased toward low complexity. Residues methionine 1–isoleucine 30 are disordered. Positions aspartate 13–tyrosine 195 are large ATPase domain (RuvB-L). Residues leucine 34, arginine 35, glycine 76, lysine 79, threonine 80, threonine 81, glutamate 142 to phenylalanine 144, arginine 185, tyrosine 195, and arginine 232 contribute to the ATP site. Residue threonine 80 participates in Mg(2+) binding. The segment at asparagine 196–aspartate 266 is small ATPAse domain (RuvB-S). A head domain (RuvB-H) region spans residues proline 269–lysine 357. DNA-binding residues include arginine 305, arginine 324, and arginine 329.

Belongs to the RuvB family. In terms of assembly, homohexamer. Forms an RuvA(8)-RuvB(12)-Holliday junction (HJ) complex. HJ DNA is sandwiched between 2 RuvA tetramers; dsDNA enters through RuvA and exits via RuvB. An RuvB hexamer assembles on each DNA strand where it exits the tetramer. Each RuvB hexamer is contacted by two RuvA subunits (via domain III) on 2 adjacent RuvB subunits; this complex drives branch migration. In the full resolvosome a probable DNA-RuvA(4)-RuvB(12)-RuvC(2) complex forms which resolves the HJ.

The protein localises to the cytoplasm. It carries out the reaction ATP + H2O = ADP + phosphate + H(+). In terms of biological role, the RuvA-RuvB-RuvC complex processes Holliday junction (HJ) DNA during genetic recombination and DNA repair, while the RuvA-RuvB complex plays an important role in the rescue of blocked DNA replication forks via replication fork reversal (RFR). RuvA specifically binds to HJ cruciform DNA, conferring on it an open structure. The RuvB hexamer acts as an ATP-dependent pump, pulling dsDNA into and through the RuvAB complex. RuvB forms 2 homohexamers on either side of HJ DNA bound by 1 or 2 RuvA tetramers; 4 subunits per hexamer contact DNA at a time. Coordinated motions by a converter formed by DNA-disengaged RuvB subunits stimulates ATP hydrolysis and nucleotide exchange. Immobilization of the converter enables RuvB to convert the ATP-contained energy into a lever motion, pulling 2 nucleotides of DNA out of the RuvA tetramer per ATP hydrolyzed, thus driving DNA branch migration. The RuvB motors rotate together with the DNA substrate, which together with the progressing nucleotide cycle form the mechanistic basis for DNA recombination by continuous HJ branch migration. Branch migration allows RuvC to scan DNA until it finds its consensus sequence, where it cleaves and resolves cruciform DNA. This is Holliday junction branch migration complex subunit RuvB from Bordetella pertussis (strain Tohama I / ATCC BAA-589 / NCTC 13251).